A 356-amino-acid chain; its full sequence is Glutamine synthetase (356 aa).

Residues 19–99 enclose the GS beta-grasp domain; that stretch reads IIAEYIWIGG…VMCDCYTPRG (81 aa). Positions 106–356 constitute a GS catalytic domain; it reads KRYNAAKILS…IAQTTILWKP (251 aa).

This sequence belongs to the glutamine synthetase family. In terms of assembly, homooctamer.

It localises to the cytoplasm. It catalyses the reaction L-glutamate + NH4(+) + ATP = L-glutamine + ADP + phosphate + H(+). This Hordeum vulgare (Barley) protein is Glutamine synthetase.